A 426-amino-acid polypeptide reads, in one-letter code: Dihydroorotase (426 aa).

2 residues coordinate Zn(2+): His58 and His60. Substrate contacts are provided by residues 60–62 and Asn92; that span reads HLR. Zn(2+)-binding residues include Asp150, His177, and His230. Asn276 is a binding site for substrate. Zn(2+) is bound at residue Asp303. Asp303 is a catalytic residue. His307 is a binding site for substrate.

The protein belongs to the metallo-dependent hydrolases superfamily. DHOase family. Class I DHOase subfamily. Zn(2+) serves as cofactor.

It carries out the reaction (S)-dihydroorotate + H2O = N-carbamoyl-L-aspartate + H(+). Its pathway is pyrimidine metabolism; UMP biosynthesis via de novo pathway; (S)-dihydroorotate from bicarbonate: step 3/3. In terms of biological role, catalyzes the reversible cyclization of carbamoyl aspartate to dihydroorotate. This chain is Dihydroorotase, found in Acetivibrio thermocellus (strain ATCC 27405 / DSM 1237 / JCM 9322 / NBRC 103400 / NCIMB 10682 / NRRL B-4536 / VPI 7372) (Clostridium thermocellum).